A 75-amino-acid polypeptide reads, in one-letter code: Mu-conotoxin GIIIA (75 aa).

Residues Met-1–Ala-20 form the signal peptide. The propeptide occupies Leu-21 to Arg-51. Disulfide bonds link Cys-54/Cys-66, Cys-55/Cys-71, and Cys-61/Cys-72. 4-hydroxyproline; partial is present on residues Pro-57 and Pro-58. At Pro-68 the chain carries 4-hydroxyproline. Ala-73 carries the post-translational modification Alanine amide.

Belongs to the conotoxin M superfamily. In terms of processing, hydroxylated; hydroxylations improve the ability to block Nav1.4/SCN4A sodium channels but does not affect folding. As to expression, expressed by the venom duct.

Its subcellular location is the secreted. Mu-conotoxins block voltage-gated sodium channels (Nav). This toxin potently blocks rat Nav1.4/SCN4A (IC(50)= 19-110 nM). It also moderately blocks rNav1.1/SCN1A (Kd=260 nM), rNav1.2/SCN2A (IC(50)=2.7-17.8 uM), and mNav1.6/SCN8A (IC(50)=680 nM). The inhibition is reversible. In vivo, induces paralysis to an isolated skeletal muscle preparation from frog (cutaneous pectoralis) within a few minutes. This chain is Mu-conotoxin GIIIA, found in Conus geographus (Geography cone).